The sequence spans 978 residues: Sensor histidine kinase TodS (978 aa).

Positions 32–103 (CEEHARIIFD…TQKRLVETAS (72 aa)) constitute a PAS 1 domain. The region spanning 108-162 (VRCDVEILGKSGGREVIAVDFSLLPICNEEGSIVYLLAEGRNITDKKKAEAMLAL) is the PAC 1 domain. A Histidine kinase 1 domain is found at 187-405 (KVSHELRTPL…LFQVKLPLNA (219 aa)). His190 is subject to Phosphohistidine; by autocatalysis. Residues 452–567 (RVLIVEDNPD…ELRARVSNLV (116 aa)) enclose the Response regulatory domain. Position 500 is a 4-aspartylphosphate (Asp500). The PAS 2 domain occupies 611–681 (SEARWKAVYE…QRLANLLQGG (71 aa)). One can recognise a PAC 2 domain in the interval 685-737 (YSVERSYLCKNGSTIWANASVSLMPQRVGESPVILQIIDDITEKKQAQENLNQ). Residues 757–974 (YIAHEINQPL…CFLVSIPARQ (218 aa)) enclose the Histidine kinase 2 domain. His760 is modified (phosphohistidine).

Autophosphorylated. Activation requires a sequential transfer of a phosphate group from a His in the primary transmitter domain, to an Asp in the receiver domain and to a His in the secondary transmitter domain.

It localises to the cytoplasm. The catalysed reaction is ATP + protein L-histidine = ADP + protein N-phospho-L-histidine.. With respect to regulation, activity is regulated by agonists and antagonists. Binding of agonists such as toluene or benzene to TodS stimulates autophosphorylation at His-190. Activity is inhibited by antagonists such as o-xylene, o-chlorotoluene and trimethylbenzene isomers, which bind to TodS but do not stimulate autophosphorylation. Agonists and antagonists bind to the same PAS domain. Member of the two-component regulatory system TodS/TodT involved in the regulation of toluene degradation. Phosphorylates TodT via a four-step phosphorelay in response to toluene. Can also be induced by benzene and ethylbenzene. The polypeptide is Sensor histidine kinase TodS (todS) (Pseudomonas putida (strain DOT-T1E)).